Consider the following 264-residue polypeptide: S-adenosylmethionine decarboxylase proenzyme (264 aa).

S113 (schiff-base intermediate with substrate; via pyruvic acid) is an active-site residue. A Pyruvic acid (Ser); by autocatalysis modification is found at S113. H118 serves as the catalytic Proton acceptor; for processing activity. C141 functions as the Proton donor; for catalytic activity in the catalytic mechanism.

It belongs to the prokaryotic AdoMetDC family. Type 2 subfamily. In terms of assembly, heterooctamer of four alpha and four beta chains arranged as a tetramer of alpha/beta heterodimers. Pyruvate serves as cofactor. Post-translationally, is synthesized initially as an inactive proenzyme. Formation of the active enzyme involves a self-maturation process in which the active site pyruvoyl group is generated from an internal serine residue via an autocatalytic post-translational modification. Two non-identical subunits are generated from the proenzyme in this reaction, and the pyruvate is formed at the N-terminus of the alpha chain, which is derived from the carboxyl end of the proenzyme. The post-translation cleavage follows an unusual pathway, termed non-hydrolytic serinolysis, in which the side chain hydroxyl group of the serine supplies its oxygen atom to form the C-terminus of the beta chain, while the remainder of the serine residue undergoes an oxidative deamination to produce ammonia and the pyruvoyl group blocking the N-terminus of the alpha chain.

The enzyme catalyses S-adenosyl-L-methionine + H(+) = S-adenosyl 3-(methylsulfanyl)propylamine + CO2. It participates in amine and polyamine biosynthesis; S-adenosylmethioninamine biosynthesis; S-adenosylmethioninamine from S-adenosyl-L-methionine: step 1/1. Its function is as follows. Catalyzes the decarboxylation of S-adenosylmethionine to S-adenosylmethioninamine (dcAdoMet), the propylamine donor required for the synthesis of the polyamines spermine and spermidine from the diamine putrescine. The sequence is that of S-adenosylmethionine decarboxylase proenzyme from Pseudomonas syringae pv. syringae (strain B728a).